The sequence spans 380 residues: S-phase entry cyclin-6 (380 aa).

The segment at 63-91 is disordered; the sequence is PRGKLQRDSTHLEKTRKRQLSNDSTDPIE.

The protein belongs to the cyclin family. Cyclin AB subfamily.

Functionally, involved in G1/S and or S phase progression. Interacts with CDC28. In Saccharomyces cerevisiae (strain ATCC 204508 / S288c) (Baker's yeast), this protein is S-phase entry cyclin-6 (CLB6).